Consider the following 73-residue polypeptide: Translation initiation factor IF-1 (73 aa).

An S1-like domain is found at 1–73; the sequence is MPKKEGVIEI…TRGRIVYRYK (73 aa).

Belongs to the IF-1 family. In terms of assembly, component of the 30S ribosomal translation pre-initiation complex which assembles on the 30S ribosome in the order IF-2 and IF-3, IF-1 and N-formylmethionyl-tRNA(fMet); mRNA recruitment can occur at any time during PIC assembly.

The protein localises to the cytoplasm. One of the essential components for the initiation of protein synthesis. Stabilizes the binding of IF-2 and IF-3 on the 30S subunit to which N-formylmethionyl-tRNA(fMet) subsequently binds. Helps modulate mRNA selection, yielding the 30S pre-initiation complex (PIC). Upon addition of the 50S ribosomal subunit IF-1, IF-2 and IF-3 are released leaving the mature 70S translation initiation complex. This chain is Translation initiation factor IF-1, found in Nocardioides sp. (strain ATCC BAA-499 / JS614).